Here is a 284-residue protein sequence, read N- to C-terminus: L-ribulose-5-phosphate 3-epimerase UlaE (284 aa).

Belongs to the L-ribulose-5-phosphate 3-epimerase family.

The enzyme catalyses L-ribulose 5-phosphate = L-xylulose 5-phosphate. The protein operates within cofactor degradation; L-ascorbate degradation; D-xylulose 5-phosphate from L-ascorbate: step 3/4. In terms of biological role, catalyzes the isomerization of L-xylulose-5-phosphate to L-ribulose-5-phosphate. Is involved in the anaerobic L-ascorbate utilization. The sequence is that of L-ribulose-5-phosphate 3-epimerase UlaE from Shigella boydii serotype 18 (strain CDC 3083-94 / BS512).